The primary structure comprises 244 residues: MASEGKVLLVASSYYGPFYPDGMNTGVHFAELLIPYQVFREAGYEVQLTSETGKCKFDDHSIKKSALGEVERDAFDNKDNEFWYALKDIKPADKINYKEFCIMFIAGGHAAMFDLPHATNLQTLAQQIYASNGVLAAVCHGPVMLPFVDDTKSPEGRSVVYGKKVTAFNSTGELVMGVSSALRERNMQDLNSLFREAGAEFVDPPTPMSDFTQVDGRIVTGVNPMSAKSTAEAAIKVSQSLRKT.

Active-site residues include Cys-139, His-140, and Glu-173.

Belongs to the peptidase C56 family. HSP31-like subfamily.

The protein resides in the cytoplasm. It localises to the nucleus. It catalyses the reaction methylglyoxal + H2O = (R)-lactate + H(+). Its function is as follows. Catalyzes the conversion of methylglyoxal (MG) to D-lactate in a single glutathione (GSH)-independent step. May play a role in detoxifying endogenously produced glyoxals. Involved in protection against reactive oxygen species (ROS). This chain is Glutathione-independent glyoxalase hsp3101, found in Schizosaccharomyces pombe (strain 972 / ATCC 24843) (Fission yeast).